A 484-amino-acid chain; its full sequence is RxLR effector protein PexRD18 (484 aa).

The signal sequence occupies residues 1–20; it reads MSHQRILLLLMAAFFAWVSA. The RxLR-dEER signature appears at 55–79; that stretch reads RFLRLYDAEVRDTVRGDNDVDREER.

This sequence belongs to the RxLR effector family.

The protein localises to the secreted. It is found in the host cell membrane. In terms of biological role, effector that enhances P.infestans colonization of Nicotiana benthamiana leaves. The sequence is that of RxLR effector protein PexRD18 from Phytophthora infestans (strain T30-4) (Potato late blight agent).